Here is a 20-residue protein sequence, read N- to C-terminus: Peptide encoded by miPEP171b (20 aa).

In terms of tissue distribution, lateral root initiations.

Functionally, regulatory peptide encoded by the primary transcript (pri-miR171b) of the microRNA miR171b that enhances the accumulation of its corresponding mature miRNA. Acts probably as a transcriptional activator of its corresponding pri-miRNA. Has no effect on the accumulation of other miRNAs. Addition of synthetic miPEP171b increases the abundance of miR171b, with consequent reduction of lateral root formation. The sequence is that of Peptide encoded by miPEP171b from Medicago truncatula (Barrel medic).